A 561-amino-acid chain; its full sequence is MSEEDIRAARLEKVEQLKQLGTNPYAYRWESTHHAAQLQEKFADLTSGEEVETEVAIAGRIMARRVFGKLAFFTLEDETGTIQLYLEKNRIQESMAEIDANAFNHLKQLTDVGDILGAKGTIKRTEKGELSVYVKEYTILTKSLLPLPDKWHGLTDVAKRYRQRYVDLIVNPEVRQTFRRRAQITAGIRRYLEQRDFLEIETPVLQSEAGGADARPFVTYHNTLEMELYLRIATELHLKRLIVGGFEKVFELGRIFRNEGISTRHNPEFTSIEVYQAYADYNDMMALTEGIITTVAQDVLGTLQITYQGETVDLTPPWRRVTMHDLVKEYTGLDFHSFQTLEEAKSAGKNAGIPGVDEAQTIGKILNLAFEEKVETKLIQPTFVIDYPVEISPLAKPHRSQPGLVERFELFIVGRETANSFSELTDPIDQRERLEAQAAKKAAGDLEAQGVDEDFLTALEYGMPPTGGLGIGIDRLVMLLTDSASIRDVIAFPLLKPEGSFIKAYRYEPTTQTLTLEFDSGSIYEYFKVPLTVKEELDNAPSKGQYFHKFIKGQFKYEQLS.

Mg(2+) is bound by residues Glu409 and Glu416.

Belongs to the class-II aminoacyl-tRNA synthetase family. As to quaternary structure, homodimer. Mg(2+) is required as a cofactor.

It localises to the cytoplasm. It catalyses the reaction tRNA(Lys) + L-lysine + ATP = L-lysyl-tRNA(Lys) + AMP + diphosphate. The chain is Lysine--tRNA ligase from Nostoc sp. (strain PCC 7120 / SAG 25.82 / UTEX 2576).